The primary structure comprises 410 residues: Histidine--tRNA ligase (410 aa).

It belongs to the class-II aminoacyl-tRNA synthetase family. In terms of assembly, homodimer.

The protein resides in the cytoplasm. It carries out the reaction tRNA(His) + L-histidine + ATP = L-histidyl-tRNA(His) + AMP + diphosphate + H(+). The protein is Histidine--tRNA ligase of Campylobacter hominis (strain ATCC BAA-381 / DSM 21671 / CCUG 45161 / LMG 19568 / NCTC 13146 / CH001A).